The primary structure comprises 822 residues: Valine--tRNA ligase (822 aa).

Positions 41–51 (PNVTGQLHLGH) match the 'HIGH' region motif. The short motif at 511-515 (KMSKS) is the 'KMSKS' region element. Residue Lys-514 coordinates ATP. Residues 765-822 (EQKGRELKEIQFLKSEILRAEKILTNKGFLEKAPREKIDLERTKLEKLKEKLAFYEKK) are a coiled coil.

Belongs to the class-I aminoacyl-tRNA synthetase family. ValS type 1 subfamily. Monomer.

It is found in the cytoplasm. It catalyses the reaction tRNA(Val) + L-valine + ATP = L-valyl-tRNA(Val) + AMP + diphosphate. In terms of biological role, catalyzes the attachment of valine to tRNA(Val). As ValRS can inadvertently accommodate and process structurally similar amino acids such as threonine, to avoid such errors, it has a 'posttransfer' editing activity that hydrolyzes mischarged Thr-tRNA(Val) in a tRNA-dependent manner. The chain is Valine--tRNA ligase from Mesomycoplasma hyopneumoniae (strain 7448) (Mycoplasma hyopneumoniae).